Consider the following 279-residue polypeptide: Protein gustavus (279 aa).

Residues 36–233 (PARIDILLDM…ITMRYIGGLD (198 aa)) form the B30.2/SPRY domain. Residues 234–279 (PEPLPLMDLCRRTIRQKIGRTNLEEHIQQLQLPLSMKTYLLYKNRR) enclose the SOCS box domain. The interval 236–279 (PLPLMDLCRRTIRQKIGRTNLEEHIQQLQLPLSMKTYLLYKNRR) is involved in binding to the Elongin BC complex.

Belongs to the SPSB family. In terms of assembly, interacts (via B30.2/SPRY domain) with vas; this interaction may be necessary for the transport of vas to the posterior pole of the oocyte. Interacts with Cul-5. May associate with the Elongin BC complex composed of Elongin-B and Elongin-C. Expressed in ovaries, primarily in nurse cells and oocytes (at protein level).

The protein resides in the cytoplasm. It is found in the nucleus. Functionally, involved in the localization of vas to the posterior pole of the oocyte. Required maternally in the germ line for efficient primordial germ cell formation. The protein is Protein gustavus (gus) of Drosophila melanogaster (Fruit fly).